Here is a 205-residue protein sequence, read N- to C-terminus: Large ribosomal subunit protein uL18 (205 aa).

This sequence belongs to the universal ribosomal protein uL18 family. In terms of assembly, part of the 50S ribosomal subunit. Contacts the 5S and 23S rRNAs.

Its function is as follows. This is one of the proteins that bind and probably mediate the attachment of the 5S RNA into the large ribosomal subunit, where it forms part of the central protuberance. This is Large ribosomal subunit protein uL18 from Pyrobaculum arsenaticum (strain DSM 13514 / JCM 11321 / PZ6).